Reading from the N-terminus, the 674-residue chain is UvrABC system protein B (674 aa).

In terms of domain architecture, Helicase ATP-binding spans 26 to 183; it reads EGLEDGLAHQ…RRLAELQYTR (158 aa). 39–46 lines the ATP pocket; the sequence is GVTGSGKT. Positions 92 to 115 match the Beta-hairpin motif; that stretch reads YYDYYQPEAYVPSSDTFIEKDASV. The 167-residue stretch at 431-597 folds into the Helicase C-terminal domain; that stretch reads QVDDLLSEIR…GLNKKISDIL (167 aa). In terms of domain architecture, UVR spans 634 to 669; it reads QKRIHQLEAQMQQHAQNLEFEEAAQVRDQLHQVREL.

It belongs to the UvrB family. As to quaternary structure, forms a heterotetramer with UvrA during the search for lesions. Interacts with UvrC in an incision complex.

The protein resides in the cytoplasm. Functionally, the UvrABC repair system catalyzes the recognition and processing of DNA lesions. A damage recognition complex composed of 2 UvrA and 2 UvrB subunits scans DNA for abnormalities. Upon binding of the UvrA(2)B(2) complex to a putative damaged site, the DNA wraps around one UvrB monomer. DNA wrap is dependent on ATP binding by UvrB and probably causes local melting of the DNA helix, facilitating insertion of UvrB beta-hairpin between the DNA strands. Then UvrB probes one DNA strand for the presence of a lesion. If a lesion is found the UvrA subunits dissociate and the UvrB-DNA preincision complex is formed. This complex is subsequently bound by UvrC and the second UvrB is released. If no lesion is found, the DNA wraps around the other UvrB subunit that will check the other stand for damage. In Erwinia tasmaniensis (strain DSM 17950 / CFBP 7177 / CIP 109463 / NCPPB 4357 / Et1/99), this protein is UvrABC system protein B.